Consider the following 164-residue polypeptide: Reticulon-like protein B22 (164 aa).

The 164-residue stretch at 1–164 (MGEMGKAMGL…ILEQEAHSDT (164 aa)) folds into the Reticulon domain. 2 consecutive transmembrane segments (helical) span residues 30-50 (SLFS…GLLF) and 117-137 (LISG…SMLC).

The protein localises to the endoplasmic reticulum membrane. This Arabidopsis thaliana (Mouse-ear cress) protein is Reticulon-like protein B22 (RTNLB22).